A 316-amino-acid chain; its full sequence is MSPDNKLLPKRIILVRHGESEGNLDTAAYTTTPDHKIQLTDSGLLQAQEAGARLHALISSNPSSPEWRVYFYVSPYDRTRSTLREIGRSFSRRRVIGVREECRIREQDFGNFQVKERMRATKKVRERFGRFFYRFPEGESAADVFDRVSSFLESLWRDIDMNRLHINPSHELNFVIVSHGLTSRVFLMKWFKWSVEQFEGLNNPGNSEIRVMELGQGGDYSLAIHHTEEELATWGLSPEMIADQKWRANAHKGEWKEDCKWYFGDFFDHMADSDKECETEATEDREEEEEEEGKRVNLLTSSEYSNEPELYNGQCC.

The active-site Tele-phosphohistidine intermediate is histidine 17. Catalysis depends on glutamate 106, which acts as the Proton donor/acceptor. The segment at 275 to 316 is disordered; sequence KECETEATEDREEEEEEEGKRVNLLTSSEYSNEPELYNGQCC. Residues 279-291 show a composition bias toward acidic residues; that stretch reads TEATEDREEEEEE.

The protein belongs to the phosphoglycerate mutase family. In terms of tissue distribution, expressed in roots, leaves, stems, flowers and siliques.

Phosphoglycerate mutase-like protein lacking PGM activity. May play a role in carbohydrates metabolism. The protein is Phosphoglycerate mutase-like protein AT74 of Arabidopsis thaliana (Mouse-ear cress).